Reading from the N-terminus, the 221-residue chain is MTDSVVVIYSGGMDSFTLLHLARARGLKVHALSFNYGQRHVRELDVAADVCRAEGIPHKVIDIRAMSEVMSGSSLTSDIEVPEGHYEEDTMKATVVPNRNMILLSLATGYAVTTGAGAVWYGAHGGDHAIYPDCRPEFVEKMDAVCRVANYEPVGIEAPFMAMDKGQILAEGLKLGLDYSQTWTCYNGRDKACGRCGSCVERLEAFAANGVTDPLAYERLA.

ATP is bound at residue 9–19 (YSGGMDSFTLL). 4 residues coordinate Zn(2+): C185, C193, C196, and C199.

It belongs to the QueC family. It depends on Zn(2+) as a cofactor.

The catalysed reaction is 7-carboxy-7-deazaguanine + NH4(+) + ATP = 7-cyano-7-deazaguanine + ADP + phosphate + H2O + H(+). Its pathway is purine metabolism; 7-cyano-7-deazaguanine biosynthesis. Catalyzes the ATP-dependent conversion of 7-carboxy-7-deazaguanine (CDG) to 7-cyano-7-deazaguanine (preQ(0)). The polypeptide is 7-cyano-7-deazaguanine synthase (Marinobacter nauticus (strain ATCC 700491 / DSM 11845 / VT8) (Marinobacter aquaeolei)).